The chain runs to 220 residues: Antistasin (220 aa).

The first 19 residues, 1–19 (MNYLFVFLALSAAVTFANA), serve as a signal peptide directing secretion. Antistasin-like domains are found at residues 21-46 (CNKIQCRMFCKFGFQQDENGCDICKC), 54-79 (CSNRYCKMLCPEGFQVDANGCQICRC), 91-117 (CDGLKQCKMHCENGFVRDENGCPKCEC), 120-145 (CKQFQCLIFCPHGNEVDENGCKTCKC), 154-180 (CDDLKQCRMFCENGFVRDENGCKKCEC), and 183-208 (CKNFICQIFCEYGNVVDENGCKTCKC).

The protein belongs to the protease inhibitor I15 (antistasin) family. In terms of tissue distribution, gland cells. It is more strongly expressed in the head than in the gastric tissue.

The protein resides in the secreted. In terms of biological role, this highly disulfide-bonded protein is a potent inhibitor of factor Xa. Facilitates digestion of tissues and may also protect the gastric tissues from its own digestive enzymes. May have therapeutic utility as an anticoagulant. Also exhibits a strong metastatic activity. This chain is Antistasin, found in Hydra vulgaris (Hydra).